We begin with the raw amino-acid sequence, 49 residues long: Thymopoietin-1 (49 aa).

The LEM-like domain occupies 4–47 (LEDPSVLTKEKLKSELVANNVTLPAGEQRKDVYVELYLQHLTAL). The segment at 32 to 36 (RKDVY) is biological activity.

This sequence belongs to the thymopoietin family.

Hormone of the thymus with pleiotropic actions on prothymocytes, mature T-cells, the nicotinic acetylcholine receptor, and pituitary corticotrophs. The sequence is that of Thymopoietin-1 from Bos taurus (Bovine).